Here is a 275-residue protein sequence, read N- to C-terminus: Elongation factor Ts (275 aa).

The involved in Mg(2+) ion dislocation from EF-Tu stretch occupies residues 76–79 (TDFV).

The protein belongs to the EF-Ts family.

It localises to the cytoplasm. Its function is as follows. Associates with the EF-Tu.GDP complex and induces the exchange of GDP to GTP. It remains bound to the aminoacyl-tRNA.EF-Tu.GTP complex up to the GTP hydrolysis stage on the ribosome. The sequence is that of Elongation factor Ts from Rhodococcus opacus (strain B4).